We begin with the raw amino-acid sequence, 52 residues long: Insulin (52 aa).

3 disulfides stabilise this stretch: Cys7-Cys38, Cys19-Cys51, and Cys37-Cys42.

This sequence belongs to the insulin family. As to quaternary structure, heterodimer of a B chain and an A chain linked by two disulfide bonds.

Its subcellular location is the secreted. Insulin decreases blood glucose concentration. It increases cell permeability to monosaccharides, amino acids and fatty acids. It accelerates glycolysis, the pentose phosphate cycle, and glycogen synthesis in liver. The sequence is that of Insulin (ins) from Polypterus senegalus (Senegal bichir).